The primary structure comprises 1321 residues: Adhesion G protein-coupled receptor A3 (1321 aa).

The signal sequence occupies residues 1 to 33 (MEPPGRRRGRAQPPLLLPLSLLALLALLGGGGG). At 34–761 (GGAAALPAGC…YTQAASLLHP (728 aa)) the chain is on the extracellular side. N-linked (GlcNAc...) asparagine glycosylation is found at N81 and N98. LRR repeat units lie at residues 82 to 103 (RTVTLILSNNKISELKNGSFSG), 106 to 127 (LLERLDLRNNLISSIDPGAFWG), 130 to 151 (SLKRLDLTNNRIGCLNADIFRG), and 154 to 175 (NLVRLNLSGNLFSSLSQGTFDY). N-linked (GlcNAc...) asparagine glycosylation is found at N159, N206, N301, N332, N433, N453, and N592. An LRRCT domain is found at 187 to 237 (EYLLCDCNILWMHRWVKEKNITVRDTRCVYPKSLQAQPVTGVKQELLTCDP). An Ig-like domain is found at 242 to 340 (PSFYMTPSHR…GNNTRTVDIV (99 aa)). The cysteines at positions 264 and 324 are disulfide-linked. A GAIN-B domain is found at 583-750 (LDKQLSFKCN…AVLMDLTGSE (168 aa)). An LRR 5 repeat occupies 594–620 (SNTFSSLALKNTIVEASIQLPPSLFSP). 3 N-linked (GlcNAc...) asparagine glycosylation sites follow: N652, N687, and N728. The GPS stretch occupies residues 701 to 750 (AARWDFDLLNGQGGWKSDGCHILYSDENITTIQCYSLSNYAVLMDLTGSE). An intrachain disulfide couples C720 to C734. A helical membrane pass occupies residues 762-782 (VVYTTAIILLLCLLAVIVSYI). At 783-796 (YHHSLIRISLKSWH) the chain is on the cytoplasmic side. A helical transmembrane segment spans residues 797-817 (MLVNLCFHIFLTCVVFVGGIT). The Extracellular segment spans residues 818-826 (QTRNASICQ). The N-linked (GlcNAc...) asparagine glycan is linked to N821. Residues 827–847 (AVGIILHYSTLATVLWVGVTA) form a helical membrane-spanning segment. The Cytoplasmic segment spans residues 848 to 876 (RNIYKQVTKKAKRCQDPDEPPPPPRPMLR). The chain crosses the membrane as a helical span at residues 877–897 (FYLIGGGIPIIVCGITAAANI). The Extracellular segment spans residues 898 to 919 (KNYGSRPNAPYCWMAWEPSLGA). The helical transmembrane segment at 920–940 (FYGPASFITFVNCMYFLSIFI) threads the bilayer. Over 941-996 (QLKRHPERKYELKEPTEEQQRLAANENGEINHQDSMSLSLISTSALENEHTFHSQL) the chain is Cytoplasmic. A helical transmembrane segment spans residues 997–1017 (LGASLTLLLYVALWMFGALAV). The Extracellular segment spans residues 1018-1024 (SLYYPLD). Residues 1025 to 1045 (LVFSFVFGATSLSFSAFFVVH) traverse the membrane as a helical segment. At 1046–1321 (HCVNREDVRL…TGLWKHETTV (276 aa)) the chain is on the cytoplasmic side. Positions 1073–1083 (NVQPPNSNGTN) are enriched in polar residues. 4 disordered regions span residues 1073-1094 (NVQPPNSNGTNGEAPKCPNSSA), 1198-1219 (VEGSVQNGLPKSRLGNNEGHSR), 1231-1265 (QYNPPQQDSSDACSTLPKSSRNFEKPVSTTSKKDA), and 1294-1321 (SNGQEGPLLGTDSTGNVRTGLWKHETTV). The segment covering 1233-1250 (NPPQQDSSDACSTLPKSS) has biased composition (polar residues). Residues 1319-1321 (TTV) carry the PDZ-binding motif.

This sequence belongs to the G-protein coupled receptor 2 family. Adhesion G-protein coupled receptor (ADGR) subfamily. As to quaternary structure, interacts (via PDZ-binding motif) with DLG1.

The protein localises to the membrane. Functionally, orphan receptor that may have a role in planar cell polarity pathway. This chain is Adhesion G protein-coupled receptor A3, found in Homo sapiens (Human).